The following is a 1085-amino-acid chain: DNA repair and recombination protein RAD26 (1085 aa).

At Ser30 the chain carries Phosphoserine. Disordered stretches follow at residues 118–141 (KEQV…GETE) and 190–219 (NLTD…EEND). Basic and acidic residues predominate over residues 128–141 (KGSKEGLQRPGETE). The span at 210–219 (SEDDEEEEND) shows a compositional bias: acidic residues. Positions 309 to 518 (YELYQQNCGG…WSLFDFIFPG (210 aa)) constitute a Helicase ATP-binding domain. Residue 322–329 (DEMGLGKT) participates in ATP binding. The short motif at 469–472 (DEGH) is the DEGH box element. In terms of domain architecture, Helicase C-terminal spans 655–818 (VVKQLLLLWH…KRFFKIHELH (164 aa)).

It belongs to the SNF2/RAD54 helicase family.

Its subcellular location is the nucleus. The catalysed reaction is ATP + H2O = ADP + phosphate + H(+). Its function is as follows. May be involved in the preferential repair of active genes. In Saccharomyces cerevisiae (strain ATCC 204508 / S288c) (Baker's yeast), this protein is DNA repair and recombination protein RAD26 (RAD26).